Reading from the N-terminus, the 295-residue chain is Phosphatidylserine decarboxylase proenzyme (295 aa).

Active-site charge relay system; for autoendoproteolytic cleavage activity residues include Asp101, His158, and Ser262. Ser262 functions as the Schiff-base intermediate with substrate; via pyruvic acid; for decarboxylase activity in the catalytic mechanism. Ser262 is subject to Pyruvic acid (Ser); by autocatalysis.

The protein belongs to the phosphatidylserine decarboxylase family. PSD-B subfamily. Prokaryotic type I sub-subfamily. Heterodimer of a large membrane-associated beta subunit and a small pyruvoyl-containing alpha subunit. Pyruvate is required as a cofactor. Is synthesized initially as an inactive proenzyme. Formation of the active enzyme involves a self-maturation process in which the active site pyruvoyl group is generated from an internal serine residue via an autocatalytic post-translational modification. Two non-identical subunits are generated from the proenzyme in this reaction, and the pyruvate is formed at the N-terminus of the alpha chain, which is derived from the carboxyl end of the proenzyme. The autoendoproteolytic cleavage occurs by a canonical serine protease mechanism, in which the side chain hydroxyl group of the serine supplies its oxygen atom to form the C-terminus of the beta chain, while the remainder of the serine residue undergoes an oxidative deamination to produce ammonia and the pyruvoyl prosthetic group on the alpha chain. During this reaction, the Ser that is part of the protease active site of the proenzyme becomes the pyruvoyl prosthetic group, which constitutes an essential element of the active site of the mature decarboxylase.

It is found in the cell membrane. The catalysed reaction is a 1,2-diacyl-sn-glycero-3-phospho-L-serine + H(+) = a 1,2-diacyl-sn-glycero-3-phosphoethanolamine + CO2. The protein operates within phospholipid metabolism; phosphatidylethanolamine biosynthesis; phosphatidylethanolamine from CDP-diacylglycerol: step 2/2. Functionally, catalyzes the formation of phosphatidylethanolamine (PtdEtn) from phosphatidylserine (PtdSer). This Pasteurella multocida (strain Pm70) protein is Phosphatidylserine decarboxylase proenzyme.